A 307-amino-acid chain; its full sequence is Methionyl-tRNA formyltransferase (307 aa).

108–111 (SLLP) is a (6S)-5,6,7,8-tetrahydrofolate binding site.

It belongs to the Fmt family.

The enzyme catalyses L-methionyl-tRNA(fMet) + (6R)-10-formyltetrahydrofolate = N-formyl-L-methionyl-tRNA(fMet) + (6S)-5,6,7,8-tetrahydrofolate + H(+). Attaches a formyl group to the free amino group of methionyl-tRNA(fMet). The formyl group appears to play a dual role in the initiator identity of N-formylmethionyl-tRNA by promoting its recognition by IF2 and preventing the misappropriation of this tRNA by the elongation apparatus. This Xylella fastidiosa (strain M23) protein is Methionyl-tRNA formyltransferase.